Consider the following 878-residue polypeptide: Pyruvate, phosphate dikinase (878 aa).

Residues methionine 1–lysine 347 form an N-terminal region. Residue arginine 96 participates in ATP binding. The interval arginine 348–serine 404 is linker 1. The interval proline 405–isoleucine 502 is central. Threonine 457 is modified (phosphothreonine; by PDRP1). The active-site Tele-phosphohistidine intermediate is histidine 459. Residues aspartate 503 to serine 537 are linker 2. Positions leucine 538–glycine 878 are C-terminal. Residues arginine 565, arginine 621, glutamate 749, glycine 770, threonine 771, asparagine 772, and aspartate 773 each coordinate substrate. Glutamate 749 lines the Mg(2+) pocket. Aspartate 773 provides a ligand contact to Mg(2+). Catalysis depends on cysteine 835, which acts as the Proton donor.

The protein belongs to the PEP-utilizing enzyme family. As to quaternary structure, homodimer. Mg(2+) serves as cofactor. Post-translationally, phosphorylation of Thr-457 in the dark inactivates the enzyme. Dephosphorylation upon light stimulation reactivates the enzyme.

It catalyses the reaction pyruvate + phosphate + ATP = phosphoenolpyruvate + AMP + diphosphate + H(+). With respect to regulation, activated by light-induced dephosphorylation. Inhibited by dark-induced phosphorylation. Both reactions are catalyzed by PDRP1. Its function is as follows. Catalyzes the reversible phosphorylation of pyruvate and phosphate. This is Pyruvate, phosphate dikinase (ppdK) from Rickettsia conorii (strain ATCC VR-613 / Malish 7).